Consider the following 145-residue polypeptide: Cytochrome c-type biogenesis protein CcmE (145 aa).

Residues 1-7 (MKAKHQR) lie on the Cytoplasmic side of the membrane. A helical; Signal-anchor for type II membrane protein transmembrane segment spans residues 8-28 (LILAVAALCGVAGAGVLAASA). At 29-145 (LRDEAAYFRT…PKNMKAAVEG (117 aa)) the chain is on the periplasmic side. H123 and Y127 together coordinate heme.

It belongs to the CcmE/CycJ family.

It localises to the cell inner membrane. Heme chaperone required for the biogenesis of c-type cytochromes. Transiently binds heme delivered by CcmC and transfers the heme to apo-cytochromes in a process facilitated by CcmF and CcmH. This Sphingopyxis alaskensis (strain DSM 13593 / LMG 18877 / RB2256) (Sphingomonas alaskensis) protein is Cytochrome c-type biogenesis protein CcmE.